The primary structure comprises 361 residues: Porphobilinogen deaminase (361 aa).

At serine 2 the chain carries N-acetylserine. At serine 69 the chain carries Phosphoserine. Lysine 74 is modified (N6-acetyllysine). Position 147 is a phosphoserine (serine 147). Residue cysteine 261 is modified to S-(dipyrrolylmethanemethyl)cysteine.

The protein belongs to the HMBS family. In terms of assembly, monomer. Dipyrromethane serves as cofactor.

It is found in the cytoplasm. It localises to the cytosol. The enzyme catalyses 4 porphobilinogen + H2O = hydroxymethylbilane + 4 NH4(+). The protein operates within porphyrin-containing compound metabolism; protoporphyrin-IX biosynthesis; coproporphyrinogen-III from 5-aminolevulinate: step 2/4. Its function is as follows. As part of the heme biosynthetic pathway, catalyzes the sequential polymerization of four molecules of porphobilinogen to form hydroxymethylbilane, also known as preuroporphyrinogen. Catalysis begins with the assembly of the dipyrromethane cofactor by the apoenzyme from two molecules of porphobilinogen or from preuroporphyrinogen. The covalently linked cofactor acts as a primer, around which the tetrapyrrole product is assembled. In the last step of catalysis, the product, preuroporphyrinogen, is released, leaving the cofactor bound to the holodeaminase intact. The sequence is that of Porphobilinogen deaminase (Hmbs) from Rattus norvegicus (Rat).